The following is a 126-amino-acid chain: MLAVPVRLKVGSRKPEWGTNRLTSCPAKDPLDRRLQNLRDRERVPEPQRSLRPGVQEDSREHGQVPEVSDPQVDLEFVDLQAKPRYRRLILKTQIPEASDSQAAQKPQAHRQIPETTEAGRETTSN.

2 disordered regions span residues 15-72 and 93-126; these read PEWG…SDPQ and TQIP…TTSN. 2 stretches are compositionally biased toward basic and acidic residues: residues 29-46 and 55-64; these read DPLD…RVPE and VQEDSREHGQ.

This is an uncharacterized protein from Homo sapiens (Human).